A 395-amino-acid polypeptide reads, in one-letter code: 1-deoxy-D-xylulose 5-phosphate reductoisomerase (395 aa).

NADPH-binding residues include T10, G11, S12, I13, R37, Q38, and N124. Position 125 (K125) interacts with 1-deoxy-D-xylulose 5-phosphate. E126 contacts NADPH. A Mn(2+)-binding site is contributed by D150. 1-deoxy-D-xylulose 5-phosphate-binding residues include S151, E152, S179, and H202. E152 serves as a coordination point for Mn(2+). G208 contacts NADPH. Positions 215, 220, 221, and 224 each coordinate 1-deoxy-D-xylulose 5-phosphate. E224 contributes to the Mn(2+) binding site.

The protein belongs to the DXR family. It depends on Mg(2+) as a cofactor. The cofactor is Mn(2+).

The enzyme catalyses 2-C-methyl-D-erythritol 4-phosphate + NADP(+) = 1-deoxy-D-xylulose 5-phosphate + NADPH + H(+). The protein operates within isoprenoid biosynthesis; isopentenyl diphosphate biosynthesis via DXP pathway; isopentenyl diphosphate from 1-deoxy-D-xylulose 5-phosphate: step 1/6. In terms of biological role, catalyzes the NADPH-dependent rearrangement and reduction of 1-deoxy-D-xylulose-5-phosphate (DXP) to 2-C-methyl-D-erythritol 4-phosphate (MEP). This chain is 1-deoxy-D-xylulose 5-phosphate reductoisomerase, found in Cupriavidus pinatubonensis (strain JMP 134 / LMG 1197) (Cupriavidus necator (strain JMP 134)).